The chain runs to 1087 residues: Period circadian protein (1087 aa).

Residues 1 to 14 (MEGESTESTHNTKV) show a composition bias toward polar residues. 2 disordered regions span residues 1–98 (MEGE…EQTE) and 123–153 (GAPT…QAEQ). The segment covering 15-46 (SDSAYSNSCSNSQSQRSGSSKSRLSGSHSSGS) has biased composition (low complexity). Positions 65 to 78 (KRNKDKSRKKKKAK) match the Nuclear localization signal motif. Positions 65-78 (KRNKDKSRKKKKAK) are enriched in basic residues. Residues 79 to 93 (SPAQATAATTTTIKS) show a composition bias toward low complexity. A compositionally biased stretch (basic and acidic residues) spans 129–140 (DAHDAHGDKPQL). Residues 141-150 (DVDEQQDDPQ) show a composition bias toward acidic residues. PAS domains are found at residues 220–355 (DSFC…ATPI) and 373–479 (FAIQ…RVFQ). Disordered regions lie at residues 613–692 (PVTA…NPLP), 736–759 (MPEY…WEGD), 871–893 (SSAS…QPEA), and 956–1087 (TTTQ…HGDG). The segment covering 655 to 664 (NLTTASNVRM) has biased composition (polar residues). The segment covering 665-689 (SSVTNTSNTGTGTSGGENSASGSSN) has biased composition (low complexity). Polar residues-rich tracts occupy residues 877–892 (QHSP…SQPE) and 1003–1024 (LPST…NNPK). Residues 1028 to 1047 (DSNGNSDDMDGSSFSSFYSS) show a composition bias toward low complexity. The span at 1060-1087 (DNEKETKVHKLKPIVEHPEEDQTQHGDG) shows a compositional bias: basic and acidic residues.

As to quaternary structure, forms a heterodimer with timeless (TIM); the complex then translocates into the nucleus. In terms of processing, phosphorylated with a circadian rhythmicity, probably by the double-time protein (dbt). Phosphorylation could be implicated in the stability of per monomer and in the formation of heterodimer per-tim.

It localises to the nucleus. It is found in the cytoplasm. Its subcellular location is the perinuclear region. Essential for biological clock functions. Determines the period length of circadian and ultradian rhythms; an increase in PER dosage leads to shortened circadian rhythms and a decrease leads to lengthened circadian rhythms. Essential for the circadian rhythmicity of locomotor activity, eclosion behavior, and for the rhythmic component of the male courtship song that originates in the thoracic nervous system. The biological cycle depends on the rhythmic formation and nuclear localization of the TIM-PER complex. Light induces the degradation of TIM, which promotes elimination of PER. Nuclear activity of the heterodimer coordinatively regulates PER and TIM transcription through a negative feedback loop. Behaves as a negative element in circadian transcriptional loop. Does not appear to bind DNA, suggesting indirect transcriptional inhibition. The protein is Period circadian protein (per) of Drosophila virilis (Fruit fly).